We begin with the raw amino-acid sequence, 175 residues long: Large ribosomal subunit protein uL10 (175 aa).

Belongs to the universal ribosomal protein uL10 family. In terms of assembly, part of the ribosomal stalk of the 50S ribosomal subunit. The N-terminus interacts with L11 and the large rRNA to form the base of the stalk. The C-terminus forms an elongated spine to which L12 dimers bind in a sequential fashion forming a multimeric L10(L12)X complex.

Its function is as follows. Forms part of the ribosomal stalk, playing a central role in the interaction of the ribosome with GTP-bound translation factors. The protein is Large ribosomal subunit protein uL10 of Prochlorococcus marinus (strain SARG / CCMP1375 / SS120).